Reading from the N-terminus, the 472-residue chain is 3-isopropylmalate dehydratase large subunit (472 aa).

The [4Fe-4S] cluster site is built by cysteine 347, cysteine 407, and cysteine 410.

Belongs to the aconitase/IPM isomerase family. LeuC type 1 subfamily. In terms of assembly, heterodimer of LeuC and LeuD. [4Fe-4S] cluster is required as a cofactor.

It carries out the reaction (2R,3S)-3-isopropylmalate = (2S)-2-isopropylmalate. Its pathway is amino-acid biosynthesis; L-leucine biosynthesis; L-leucine from 3-methyl-2-oxobutanoate: step 2/4. Its function is as follows. Catalyzes the isomerization between 2-isopropylmalate and 3-isopropylmalate, via the formation of 2-isopropylmaleate. This chain is 3-isopropylmalate dehydratase large subunit, found in Synechococcus sp. (strain CC9902).